Here is a 315-residue protein sequence, read N- to C-terminus: Ribosomal protein L11 methyltransferase (315 aa).

S-adenosyl-L-methionine is bound by residues T152, G185, D207, and N249.

This sequence belongs to the methyltransferase superfamily. PrmA family.

The protein resides in the cytoplasm. It carries out the reaction L-lysyl-[protein] + 3 S-adenosyl-L-methionine = N(6),N(6),N(6)-trimethyl-L-lysyl-[protein] + 3 S-adenosyl-L-homocysteine + 3 H(+). Functionally, methylates ribosomal protein L11. This is Ribosomal protein L11 methyltransferase from Geotalea uraniireducens (strain Rf4) (Geobacter uraniireducens).